The following is a 293-amino-acid chain: Protoheme IX farnesyltransferase (293 aa).

9 helical membrane-spanning segments follow: residues 9–29 (LIKPGIVLGNIISAISGFLLA), 38–58 (YIILMYMILGTTLVIASSCVL), 86–106 (FVKNSIIYAIILNTLGFLFLG), 111–131 (LLTILLTMIGFLVYIGIYSLW), 137–157 (IYSTIIGSISGSMPPIIGYCT), 167–187 (WLLFIAFSFWQIPHSYSITIF), 211–231 (IHMILCILIFTLANISLTVLG), 234–254 (SYTFLYIISIMSIFWLYTGWY), and 271–291 (ILSIVIITSLNVLLSLDSIFI).

It belongs to the UbiA prenyltransferase family. Protoheme IX farnesyltransferase subfamily.

The protein resides in the cell inner membrane. It catalyses the reaction heme b + (2E,6E)-farnesyl diphosphate + H2O = Fe(II)-heme o + diphosphate. It functions in the pathway porphyrin-containing compound metabolism; heme O biosynthesis; heme O from protoheme: step 1/1. Its function is as follows. Converts heme B (protoheme IX) to heme O by substitution of the vinyl group on carbon 2 of heme B porphyrin ring with a hydroxyethyl farnesyl side group. This Blochmanniella floridana protein is Protoheme IX farnesyltransferase.